Reading from the N-terminus, the 640-residue chain is Replication protein A 70 kDa DNA-binding subunit A (640 aa).

Residues 211-293 constitute a DNA-binding region (OB); it reads AIKARVTAKG…NHLKNEWEIF (83 aa). A C4-type zinc finger spans residues 503–529; it reads CPLMIGDKQCNKKVTRSGTNRWLCDRC.

This sequence belongs to the replication factor A protein 1 family. Heterotrimer of RPA1, RPA2 and RPA3 (canonical replication protein A complex). Interacts with RPA2A. As to expression, expressed in roots, leaves, stalks and flower buds.

Its subcellular location is the nucleus. Its function is as follows. Component of the replication protein A complex (RPA) required for DNA recombination, repair and replication. The activity of RPA is mediated by single-stranded DNA binding and protein interactions. Plays an essential role at later stages of meiotic recombination events required for the formation of class I crossovers. Is essential for normal progression through meiosis in pollen mother cells. Is involved in repair of double-strand DNA breaks (DSBs) induced by genotoxic stresses, but does not seem to be required for the repair of meiotic DSBs. The polypeptide is Replication protein A 70 kDa DNA-binding subunit A (RPA1A) (Arabidopsis thaliana (Mouse-ear cress)).